The sequence spans 286 residues: Phosphate import ATP-binding protein PstB (286 aa).

Positions Val-40 to Ile-281 constitute an ABC transporter domain. Gly-72 to Ser-79 is an ATP binding site.

Belongs to the ABC transporter superfamily. Phosphate importer (TC 3.A.1.7) family. In terms of assembly, the complex is composed of two ATP-binding proteins (PstB), two transmembrane proteins (PstC and PstA) and a solute-binding protein (PstS).

The protein localises to the cell inner membrane. It catalyses the reaction phosphate(out) + ATP + H2O = ADP + 2 phosphate(in) + H(+). In terms of biological role, part of the ABC transporter complex PstSACB involved in phosphate import. Responsible for energy coupling to the transport system. The protein is Phosphate import ATP-binding protein PstB of Chlorobium luteolum (strain DSM 273 / BCRC 81028 / 2530) (Pelodictyon luteolum).